Reading from the N-terminus, the 448-residue chain is F-box/FBD/LRR-repeat protein At2g04230 (448 aa).

The 53-residue stretch at 12-64 folds into the F-box domain; the sequence is EDRISDLPDALLLQILSSLPTENAIATSVLSKRWRSLWTMLPKLKFDSNFNPV. 7 LRR repeats span residues 72 to 98, 149 to 176, 177 to 202, 204 to 225, 226 to 251, 271 to 296, and 319 to 345; these read PTMF…HLSF, ILKL…YLDQ, VHFK…VVHR, SNAD…TIED, LRQE…NING, ISNV…ILHL, and THER…KLTD. The FBD domain occupies 359-410; it reads KWNPPKCAPECLLFHLETFLWIGYEWQRGDEKEVATYILENARRLKKATFST.

The protein is F-box/FBD/LRR-repeat protein At2g04230 of Arabidopsis thaliana (Mouse-ear cress).